Here is a 464-residue protein sequence, read N- to C-terminus: Argininosuccinate lyase (464 aa).

It belongs to the lyase 1 family. Argininosuccinate lyase subfamily.

It is found in the cytoplasm. It carries out the reaction 2-(N(omega)-L-arginino)succinate = fumarate + L-arginine. Its pathway is amino-acid biosynthesis; L-arginine biosynthesis; L-arginine from L-ornithine and carbamoyl phosphate: step 3/3. The protein is Argininosuccinate lyase of Pseudomonas aeruginosa (strain LESB58).